We begin with the raw amino-acid sequence, 399 residues long: 4-hydroxy-3-methylbut-2-enyl diphosphate reductase (399 aa).

Residue Cys-66 coordinates [4Fe-4S] cluster. Residue His-96 participates in (2E)-4-hydroxy-3-methylbut-2-enyl diphosphate binding. His-96 is a dimethylallyl diphosphate binding site. His-96 contributes to the isopentenyl diphosphate binding site. Position 157 (Cys-157) interacts with [4Fe-4S] cluster. His-185 is a (2E)-4-hydroxy-3-methylbut-2-enyl diphosphate binding site. His-185 is a dimethylallyl diphosphate binding site. Position 185 (His-185) interacts with isopentenyl diphosphate. Catalysis depends on Glu-187, which acts as the Proton donor. Thr-250 is a (2E)-4-hydroxy-3-methylbut-2-enyl diphosphate binding site. Cys-288 is a [4Fe-4S] cluster binding site. Residues Ser-317, Ser-318, Asn-319, and Ser-379 each contribute to the (2E)-4-hydroxy-3-methylbut-2-enyl diphosphate site. Ser-317, Ser-318, Asn-319, and Ser-379 together coordinate dimethylallyl diphosphate. Residues Ser-317, Ser-318, Asn-319, and Ser-379 each coordinate isopentenyl diphosphate.

The protein belongs to the IspH family. Requires [4Fe-4S] cluster as cofactor.

It catalyses the reaction isopentenyl diphosphate + 2 oxidized [2Fe-2S]-[ferredoxin] + H2O = (2E)-4-hydroxy-3-methylbut-2-enyl diphosphate + 2 reduced [2Fe-2S]-[ferredoxin] + 2 H(+). It carries out the reaction dimethylallyl diphosphate + 2 oxidized [2Fe-2S]-[ferredoxin] + H2O = (2E)-4-hydroxy-3-methylbut-2-enyl diphosphate + 2 reduced [2Fe-2S]-[ferredoxin] + 2 H(+). It functions in the pathway isoprenoid biosynthesis; dimethylallyl diphosphate biosynthesis; dimethylallyl diphosphate from (2E)-4-hydroxy-3-methylbutenyl diphosphate: step 1/1. Its pathway is isoprenoid biosynthesis; isopentenyl diphosphate biosynthesis via DXP pathway; isopentenyl diphosphate from 1-deoxy-D-xylulose 5-phosphate: step 6/6. In terms of biological role, catalyzes the conversion of 1-hydroxy-2-methyl-2-(E)-butenyl 4-diphosphate (HMBPP) into a mixture of isopentenyl diphosphate (IPP) and dimethylallyl diphosphate (DMAPP). Acts in the terminal step of the DOXP/MEP pathway for isoprenoid precursor biosynthesis. The polypeptide is 4-hydroxy-3-methylbut-2-enyl diphosphate reductase (Synechococcus sp. (strain WH7803)).